The chain runs to 1620 residues: MGAIGLLWLLPLLLSTAAVGSGMGTGQRAGSPAAGPPLQPREPLSYSRLQRKSLAVDFVVPSLFRVYARDLLLPPSSSELKAGRPEARGSLALDCAPLLRLLGPAPGVSWTAGSPAPAEARTLSRVLKGGSVRKLRRAKQLVLELGEEAILEGCVGPPGEAAVGLLQFNLSELFSWWIRQGEGRLRIRLMPEKKASEVGREGRLSAAIRASQPRLLFQIFGTGHSSLESPTNMPSPSPDYFTWNLTWIMKDSFPFLSHRSRYGLECSFDFPCELEYSPPLHDLRNQSWSWRRIPSEEASQMDLLDGPGAERSKEMPRGSFLLLNTSADSKHTILSPWMRSSSEHCTLAVSVHRHLQPSGRYIAQLLPHNEAAREILLMPTPGKHGWTVLQGRIGRPDNPFRVALEYISSGNRSLSAVDFFALKNCSEGTSPGSKMALQSSFTCWNGTVLQLGQACDFHQDCAQGEDESQMCRKLPVGFYCNFEDGFCGWTQGTLSPHTPQWQVRTLKDARFQDHQDHALLLSTTDVPASESATVTSATFPAPIKSSPCELRMSWLIRGVLRGNVSLVLVENKTGKEQGRMVWHVAAYEGLSLWQWMVLPLLDVSDRFWLQMVAWWGQGSRAIVAFDNISISLDCYLTISGEDKILQNTAPKSRNLFERNPNKELKPGENSPRQTPIFDPTVHWLFTTCGASGPHGPTQAQCNNAYQNSNLSVEVGSEGPLKGIQIWKVPATDTYSISGYGAAGGKGGKNTMMRSHGVSVLGIFNLEKDDMLYILVGQQGEDACPSTNQLIQKVCIGENNVIEEEIRVNRSVHEWAGGGGGGGGATYVFKMKDGVPVPLIIAAGGGGRAYGAKTDTFHPERLENNSSVLGLNGNSGAAGGGGGWNDNTSLLWAGKSLQEGATGGHSCPQAMKKWGWETRGGFGGGGGGCSSGGGGGGYIGGNAASNNDPEMDGEDGVSFISPLGILYTPALKVMEGHGEVNIKHYLNCSHCEVDECHMDPESHKVICFCDHGTVLAEDGVSCIVSPTPEPHLPLSLILSVVTSALVAALVLAFSGIMIVYRRKHQELQAMQMELQSPEYKLSKLRTSTIMTDYNPNYCFAGKTSSISDLKEVPRKNITLIRGLGHGAFGEVYEGQVSGMPNDPSPLQVAVKTLPEVCSEQDELDFLMEALIISKFNHQNIVRCIGVSLQSLPRFILLELMAGGDLKSFLRETRPRPSQPSSLAMLDLLHVARDIACGCQYLEENHFIHRDIAARNCLLTCPGPGRVAKIGDFGMARDIYRASYYRKGGCAMLPVKWMPPEAFMEGIFTSKTDTWSFGVLLWEIFSLGYMPYPSKSNQEVLEFVTSGGRMDPPKNCPGPVYRIMTQCWQHQPEDRPNFAIILERIEYCTQDPDVINTALPIEYGPLVEEEEKVPVRPKDPEGVPPLLVSQQAKREEERSPAAPPPLPTTSSGKAAKKPTAAEISVRVPRGPAVEGGHVNMAFSQSNPPSELHKVHGSRNKPTSLWNPTYGSWFTEKPTKKNNPIAKKEPHDRGNLGLEGSCTVPPNVATGRLPGASLLLEPSSLTANMKEVPLFRLRHFPCGNVNYGYQQQGLPLEAATAPGAGHYEDTILKSKNSMNQPGP.

A signal peptide spans 1–18; that stretch reads MGAIGLLWLLPLLLSTAA. Residues 19–1038 lie on the Extracellular side of the membrane; sequence VGSGMGTGQR…PHLPLSLILS (1020 aa). Residues 48–70 are heparin-binding region; that stretch reads RLQRKSLAVDFVVPSLFRVYARD. N-linked (GlcNAc...) asparagine glycosylation is found at N169, N244, N285, N324, N411, N424, N445, N563, N571, and N627. Positions 264-427 constitute an MAM 1 domain; it reads LECSFDFPCE…DFFALKNCSE (164 aa). The 37-residue stretch at 437-473 folds into the LDL-receptor class A domain; the sequence is LQSSFTCWNGTVLQLGQACDFHQDCAQGEDESQMCRK. The region spanning 478-636 is the MAM 2 domain; it reads FYCNFEDGFC…NISISLDCYL (159 aa). Residues 650 to 674 form a disordered region; the sequence is PKSRNLFERNPNKELKPGENSPRQT. The segment covering 654–666 has biased composition (basic and acidic residues); that stretch reads NLFERNPNKELKP. A disulfide bridge connects residues C688 and C701. The N-linked (GlcNAc...) asparagine glycan is linked to N709. C783 and C794 are oxidised to a cystine. N-linked (GlcNAc...) asparagine glycans are attached at residues N808, N863, N864, and N886. C906 and C928 are disulfide-bonded. N-linked (GlcNAc...) asparagine glycosylation occurs at N986. Intrachain disulfides connect C987–C995, C990–C1006, and C1008–C1021. Positions 987–1025 are EGF-like; it reads CSHCEVDECHMDPESHKVICFCDHGTVLAEDGVSCIVSP. Residues 1039 to 1059 form a helical membrane-spanning segment; sequence VVTSALVAALVLAFSGIMIVY. Residues 1060-1620 lie on the Cytoplasmic side of the membrane; the sequence is RRKHQELQAM…SKNSMNQPGP (561 aa). Phosphotyrosine is present on residues Y1078, Y1092, and Y1096. Positions 1116–1392 constitute a Protein kinase domain; the sequence is ITLIRGLGHG…IEYCTQDPDV (277 aa). H1124 contacts ATP. Y1131 is subject to Phosphotyrosine. ATP is bound by residues K1150 and 1197 to 1199; that span reads ELM. Catalysis depends on D1249, which acts as the Proton acceptor. D1270 lines the ATP pocket. Y1278 carries the post-translational modification Phosphotyrosine. Residues 1408–1463 are disordered; that stretch reads EEKVPVRPKDPEGVPPLLVSQQAKREEERSPAAPPPLPTTSSGKAAKKPTAAEISV. Residues 1410 to 1419 show a composition bias toward basic and acidic residues; sequence KVPVRPKDPE. Y1507 is subject to Phosphotyrosine. Residues 1514–1540 are disordered; that stretch reads KPTKKNNPIAKKEPHDRGNLGLEGSCT. Position 1604 is a phosphotyrosine (Y1604).

The protein belongs to the protein kinase superfamily. Tyr protein kinase family. Insulin receptor subfamily. In terms of assembly, homodimer; homodimerizes following heparin- and ligand-binding. Interacts with CBL, IRS1, PIK3R1 and PLCG1. Interacts with FRS2 and SHC1. Interacts with PTN and MDK. In terms of processing, phosphorylated at tyrosine residues by autocatalysis, which activates kinase activity. In cells not stimulated by a ligand, receptor protein tyrosine phosphatase beta and zeta complex (PTPRB/PTPRZ1) dephosphorylates ALK at the sites in ALK that are undergoing autophosphorylation through autoactivation. Phosphorylation at Tyr-1507 is critical for SHC1 association. N-glycosylated. In terms of tissue distribution, expressed in brain and CNS. Also expressed in the small intestine and testis, but not in normal lymphoid cells.

Its subcellular location is the cell membrane. The catalysed reaction is L-tyrosyl-[protein] + ATP = O-phospho-L-tyrosyl-[protein] + ADP + H(+). With respect to regulation, activated upon ALKAL2 ligand-binding. ALKAL2-driven activation is coupled with heparin-binding. Following ligand-binding, homodimerizes and autophosphorylates, activating its kinase activity. Inactivated through dephosphorylation by receptor protein tyrosine phosphatase beta and zeta complex (PTPRB/PTPRZ1) when there is no stimulation by a ligand. Staurosporine, crizotinib and CH5424802 act as inhibitors of ALK kinase activity. In terms of biological role, neuronal receptor tyrosine kinase that is essentially and transiently expressed in specific regions of the central and peripheral nervous systems and plays an important role in the genesis and differentiation of the nervous system. Also acts as a key thinness protein involved in the resistance to weight gain: in hypothalamic neurons, controls energy expenditure acting as a negative regulator of white adipose tissue lipolysis and sympathetic tone to fine-tune energy homeostasis. Following activation by ALKAL2 ligand at the cell surface, transduces an extracellular signal into an intracellular response. In contrast, ALKAL1 is not a potent physiological ligand for ALK. Ligand-binding to the extracellular domain induces tyrosine kinase activation, leading to activation of the mitogen-activated protein kinase (MAPK) pathway. Phosphorylates almost exclusively at the first tyrosine of the Y-x-x-x-Y-Y motif. Induces tyrosine phosphorylation of CBL, FRS2, IRS1 and SHC1, as well as of the MAP kinases MAPK1/ERK2 and MAPK3/ERK1. ALK activation may also be regulated by pleiotrophin (PTN) and midkine (MDK). PTN-binding induces MAPK pathway activation, which is important for the anti-apoptotic signaling of PTN and regulation of cell proliferation. MDK-binding induces phosphorylation of the ALK target insulin receptor substrate (IRS1), activates mitogen-activated protein kinases (MAPKs) and PI3-kinase, resulting also in cell proliferation induction. Drives NF-kappa-B activation, probably through IRS1 and the activation of the AKT serine/threonine kinase. Recruitment of IRS1 to activated ALK and the activation of NF-kappa-B are essential for the autocrine growth and survival signaling of MDK. The protein is ALK tyrosine kinase receptor of Homo sapiens (Human).